A 378-amino-acid polypeptide reads, in one-letter code: Erythronate-4-phosphate dehydrogenase (378 aa).

Substrate-binding residues include S45 and T66. D146 and T175 together coordinate NAD(+). The active site involves R208. Residue D232 coordinates NAD(+). The active site involves E237. Catalysis depends on H254, which acts as the Proton donor. G257 lines the NAD(+) pocket. Y258 is a binding site for substrate.

The protein belongs to the D-isomer specific 2-hydroxyacid dehydrogenase family. PdxB subfamily. As to quaternary structure, homodimer.

Its subcellular location is the cytoplasm. The catalysed reaction is 4-phospho-D-erythronate + NAD(+) = (R)-3-hydroxy-2-oxo-4-phosphooxybutanoate + NADH + H(+). It participates in cofactor biosynthesis; pyridoxine 5'-phosphate biosynthesis; pyridoxine 5'-phosphate from D-erythrose 4-phosphate: step 2/5. In terms of biological role, catalyzes the oxidation of erythronate-4-phosphate to 3-hydroxy-2-oxo-4-phosphonooxybutanoate. The chain is Erythronate-4-phosphate dehydrogenase from Escherichia coli O7:K1 (strain IAI39 / ExPEC).